Consider the following 819-residue polypeptide: Leucine--tRNA ligase (819 aa).

Positions 40-51 (PYPSGAGLHVGH) match the 'HIGH' region motif. The 'KMSKS' region motif lies at 600-604 (KMSKS). Position 603 (Lys603) interacts with ATP.

It belongs to the class-I aminoacyl-tRNA synthetase family.

The protein resides in the cytoplasm. The enzyme catalyses tRNA(Leu) + L-leucine + ATP = L-leucyl-tRNA(Leu) + AMP + diphosphate. The chain is Leucine--tRNA ligase from Chlamydia trachomatis serovar D (strain ATCC VR-885 / DSM 19411 / UW-3/Cx).